Consider the following 196-residue polypeptide: Agamous-like MADS-box protein AGL70 (196 aa).

Residues 1 to 61 (MGRRKVEIKR…GKLYDSASGD (61 aa)) enclose the MADS-box domain. Residues 8-15 (IKRIENKS) carry the Nuclear localization signal motif. A K-box domain is found at 80-170 (ALDLAEKIRN…ASQVGKKTFL (91 aa)).

As to expression, mostly expressed in roots, leaves and flowers, and, to a lower extent, in inflorescence, siliques, pollen and shoots.

The protein resides in the nucleus. Functionally, probable transcription factor involved in the negative regulation of flowering time, probably through the photoperiodic and vernalization pathways; more efficient in cv. Landsberg erecta than in cv. Columbia background. Prevents premature flowering. Involved in the modulation of vernalization impact on flowering according to genotype acclimation to altitude. The protein is Agamous-like MADS-box protein AGL70 of Arabidopsis thaliana (Mouse-ear cress).